The chain runs to 396 residues: S-adenosylmethionine synthase 2 (396 aa).

Residue E13 participates in Mg(2+) binding. Residue H19 coordinates ATP. E47 contributes to the K(+) binding site. L-methionine-binding residues include E60 and Q103. Residues D171 to K173, S239 to F242, D250, R256 to K257, A273, K277, and K281 contribute to the ATP site. L-methionine is bound at residue D250. K281 is an L-methionine binding site.

Belongs to the AdoMet synthase family. Homotetramer. The cofactor is Mn(2+). Requires Mg(2+) as cofactor. Co(2+) is required as a cofactor. It depends on K(+) as a cofactor.

It localises to the cytoplasm. It carries out the reaction L-methionine + ATP + H2O = S-adenosyl-L-methionine + phosphate + diphosphate. Its pathway is amino-acid biosynthesis; S-adenosyl-L-methionine biosynthesis; S-adenosyl-L-methionine from L-methionine: step 1/1. Functionally, catalyzes the formation of S-adenosylmethionine from methionine and ATP. The reaction comprises two steps that are both catalyzed by the same enzyme: formation of S-adenosylmethionine (AdoMet) and triphosphate, and subsequent hydrolysis of the triphosphate. This chain is S-adenosylmethionine synthase 2 (SAM2), found in Dianthus caryophyllus (Carnation).